We begin with the raw amino-acid sequence, 328 residues long: MLHKLLIVVFLVVCLHDMRLNGQKKKETLLSEKVSQMMEWVSKRAVVRLNGEKFKRLVRAHPRNYSVIVMFTALQPQRQCGVCRQADEEYQILANSWRYSSAFTNRIFFAMVDFDEGSDVFQMLNMNSAPTFINFPAKGKPKRADTYELQVRGFAAEQLARWVADRTDVHIRVIRPPNYAGPLMLGLLLAFIGSLAYLRRNNLEFLFNKNVWAFSALCFVLIMTSGQMWNHIRGPPYAHKNPNTGQVSYIHGSSQAQFVAETHIVLLFNAAVTIGMVLLHEAATSGLDIVKRKIMCVAGIGLVVLFFSWLLSVFRAKYHGYPYSFLFG.

Positions 1–22 are cleaved as a signal peptide; that stretch reads MLHKLLIVVFLVVCLHDMRLNG. At 23–177 the chain is on the extracellular side; it reads QKKKETLLSE…DVHIRVIRPP (155 aa). The Thioredoxin domain maps to 40–168; that stretch reads WVSKRAVVRL…LARWVADRTD (129 aa). Asparagine 64 carries an N-linked (GlcNAc...) asparagine glycan. A disulfide bridge links cysteine 80 with cysteine 83. The helical transmembrane segment at 178–198 threads the bilayer; that stretch reads NYAGPLMLGLLLAFIGSLAYL. Over 199–202 the chain is Cytoplasmic; that stretch reads RRNN. The helical transmembrane segment at 203-223 threads the bilayer; that stretch reads LEFLFNKNVWAFSALCFVLIM. At 224–257 the chain is on the extracellular side; that stretch reads TSGQMWNHIRGPPYAHKNPNTGQVSYIHGSSQAQ. A helical membrane pass occupies residues 258 to 278; sequence FVAETHIVLLFNAAVTIGMVL. The Cytoplasmic portion of the chain corresponds to 279–293; it reads LHEAATSGLDIVKRK. Residues 294 to 314 form a helical membrane-spanning segment; sequence IMCVAGIGLVVLFFSWLLSVF. The Extracellular segment spans residues 315 to 328; it reads RAKYHGYPYSFLFG.

It belongs to the OST3/OST6 family. As to quaternary structure, accessory component of the STT3B-containing form of the oligosaccharyltransferase (OST) complex.

It is found in the cell membrane. The protein resides in the endoplasmic reticulum. The protein localises to the endoplasmic reticulum membrane. The protein operates within protein modification; protein glycosylation. Functionally, accessory component of the STT3B-containing form of the N-oligosaccharyl transferase (OST) complex which catalyzes the transfer of a high mannose oligosaccharide from a lipid-linked oligosaccharide donor to an asparagine residue within an Asn-X-Ser/Thr consensus motif in nascent polypeptide chains. Involved in N-glycosylation of STT3B-dependent substrates. Specifically required for the glycosylation of a subset of acceptor sites that are near cysteine residues; in this function seems to act redundantly with TUSC3. In its oxidized form proposed to form transient mixed disulfides with a glycoprotein substrate to facilitate access of STT3B to the unmodified acceptor site. Also has oxidoreductase-independent functions in the STT3B-containing OST complex possibly involving substrate recognition. Could indirectly play a role in Mg(2+) transport. This is Dolichyl-diphosphooligosaccharide--protein glycosyltransferase subunit MAGT1 from Danio rerio (Zebrafish).